The chain runs to 254 residues: Probable transcriptional regulatory protein Cyan7425_4347 (254 aa).

Belongs to the TACO1 family.

It localises to the cytoplasm. The protein is Probable transcriptional regulatory protein Cyan7425_4347 of Cyanothece sp. (strain PCC 7425 / ATCC 29141).